The primary structure comprises 256 residues: Imidazole glycerol phosphate synthase subunit HisF (256 aa).

Residues aspartate 12 and aspartate 131 contribute to the active site.

It belongs to the HisA/HisF family. In terms of assembly, heterodimer of HisH and HisF.

It localises to the cytoplasm. It catalyses the reaction 5-[(5-phospho-1-deoxy-D-ribulos-1-ylimino)methylamino]-1-(5-phospho-beta-D-ribosyl)imidazole-4-carboxamide + L-glutamine = D-erythro-1-(imidazol-4-yl)glycerol 3-phosphate + 5-amino-1-(5-phospho-beta-D-ribosyl)imidazole-4-carboxamide + L-glutamate + H(+). The protein operates within amino-acid biosynthesis; L-histidine biosynthesis; L-histidine from 5-phospho-alpha-D-ribose 1-diphosphate: step 5/9. IGPS catalyzes the conversion of PRFAR and glutamine to IGP, AICAR and glutamate. The HisF subunit catalyzes the cyclization activity that produces IGP and AICAR from PRFAR using the ammonia provided by the HisH subunit. The protein is Imidazole glycerol phosphate synthase subunit HisF of Thermobifida fusca (strain YX).